A 292-amino-acid chain; its full sequence is MKKISTFIITKNEEARIARAINSVKNITDEVIVVDNESTDDTVHIAKTLGAKVIVKPWLGYVGQKSFAESMCVNDWVLNIDADEELSQELQDEIEYIFASHNQDRYLAYQIKLLIMYRGDQKSRMFAPLNKCIRLYNKKFASFANTINSTTHDSVVFNKDVDFIGKIYLLNGIAYHYSGTSIEQLVNKANFYSSEQAKDLVKQGKKFSNFRLATEMIWWFLKAFFIRRYFVFGFDGFVDSIIFAFARFLRLAKLRELSLKSRNVIASDNYINYCMDIKSLLQKKKRSRYPKK.

The protein belongs to the glycosyltransferase 2 family. WaaE/KdtX subfamily.

This is an uncharacterized protein from Rickettsia typhi (strain ATCC VR-144 / Wilmington).